Consider the following 499-residue polypeptide: Aspartyl/glutamyl-tRNA(Asn/Gln) amidotransferase subunit B (499 aa).

It belongs to the GatB/GatE family. GatB subfamily. As to quaternary structure, heterotrimer of A, B and C subunits.

The enzyme catalyses L-glutamyl-tRNA(Gln) + L-glutamine + ATP + H2O = L-glutaminyl-tRNA(Gln) + L-glutamate + ADP + phosphate + H(+). It carries out the reaction L-aspartyl-tRNA(Asn) + L-glutamine + ATP + H2O = L-asparaginyl-tRNA(Asn) + L-glutamate + ADP + phosphate + 2 H(+). Allows the formation of correctly charged Asn-tRNA(Asn) or Gln-tRNA(Gln) through the transamidation of misacylated Asp-tRNA(Asn) or Glu-tRNA(Gln) in organisms which lack either or both of asparaginyl-tRNA or glutaminyl-tRNA synthetases. The reaction takes place in the presence of glutamine and ATP through an activated phospho-Asp-tRNA(Asn) or phospho-Glu-tRNA(Gln). This chain is Aspartyl/glutamyl-tRNA(Asn/Gln) amidotransferase subunit B, found in Bifidobacterium longum (strain DJO10A).